The primary structure comprises 88 residues: Large ribosomal subunit protein bL27 (88 aa).

A disordered region spans residues 1–26 (MAHKKGTGSTRNGRDSNSKRLGVKAY).

This sequence belongs to the bacterial ribosomal protein bL27 family.

The polypeptide is Large ribosomal subunit protein bL27 (Prochlorococcus marinus (strain MIT 9211)).